Here is a 172-residue protein sequence, read N- to C-terminus: Ribosome maturation factor RimM (172 aa).

One can recognise a PRC barrel domain in the interval 96-169; sequence PDEFYDHQLE…AIEIDPPEGL (74 aa).

Belongs to the RimM family. In terms of assembly, binds ribosomal protein uS19.

Its subcellular location is the cytoplasm. Its function is as follows. An accessory protein needed during the final step in the assembly of 30S ribosomal subunit, possibly for assembly of the head region. Essential for efficient processing of 16S rRNA. May be needed both before and after RbfA during the maturation of 16S rRNA. It has affinity for free ribosomal 30S subunits but not for 70S ribosomes. The protein is Ribosome maturation factor RimM of Mycolicibacterium vanbaalenii (strain DSM 7251 / JCM 13017 / BCRC 16820 / KCTC 9966 / NRRL B-24157 / PYR-1) (Mycobacterium vanbaalenii).